Here is a 288-residue protein sequence, read N- to C-terminus: 33 kDa chaperonin (288 aa).

2 cysteine pairs are disulfide-bonded: C235/C237 and C268/C271.

It belongs to the HSP33 family. In terms of processing, under oxidizing conditions two disulfide bonds are formed involving the reactive cysteines. Under reducing conditions zinc is bound to the reactive cysteines and the protein is inactive.

The protein resides in the cytoplasm. Its function is as follows. Redox regulated molecular chaperone. Protects both thermally unfolding and oxidatively damaged proteins from irreversible aggregation. Plays an important role in the bacterial defense system toward oxidative stress. In Streptococcus thermophilus (strain ATCC BAA-250 / LMG 18311), this protein is 33 kDa chaperonin.